The sequence spans 267 residues: tRNA pseudouridine synthase A (267 aa).

Aspartate 51 (nucleophile) is an active-site residue. Tyrosine 109 provides a ligand contact to substrate.

The protein belongs to the tRNA pseudouridine synthase TruA family. Homodimer.

It carries out the reaction uridine(38/39/40) in tRNA = pseudouridine(38/39/40) in tRNA. Its function is as follows. Formation of pseudouridine at positions 38, 39 and 40 in the anticodon stem and loop of transfer RNAs. In Staphylococcus aureus (strain bovine RF122 / ET3-1), this protein is tRNA pseudouridine synthase A.